Here is a 223-residue protein sequence, read N- to C-terminus: UPF0502 protein Shew185_1758 (223 aa).

This sequence belongs to the UPF0502 family.

This chain is UPF0502 protein Shew185_1758, found in Shewanella baltica (strain OS185).